A 181-amino-acid polypeptide reads, in one-letter code: Thymidine kinase (181 aa).

Glycine 13 to serine 20 is a binding site for ATP. The active-site Proton acceptor is the glutamate 85. Phenylalanine 115 contacts substrate. The Zn(2+) site is built by cysteine 140 and cysteine 143. Isoleucine 159 to glycine 163 is a binding site for substrate. 2 residues coordinate Zn(2+): cysteine 172 and cysteine 175.

Belongs to the thymidine kinase family.

The catalysed reaction is thymidine + ATP = dTMP + ADP + H(+). The chain is Thymidine kinase (TK) from Yaba monkey tumor virus (strain VR587) (YMTV).